The chain runs to 365 residues: Paraneoplastic antigen Ma2 homolog (365 aa).

An N-acetylalanine modification is found at Ala-2. Residues 336–365 (EEEDAYFEQESREEPGEREGSGCWNNSRNN) are disordered. Positions 344 to 355 (QESREEPGEREG) are enriched in basic and acidic residues.

This sequence belongs to the PNMA family. As to expression, expressed in the cerebrum, cerebellum and testis.

It localises to the nucleus. The protein localises to the nucleolus. The chain is Paraneoplastic antigen Ma2 homolog (Pnma2) from Mus musculus (Mouse).